The chain runs to 969 residues: Endogenous retrovirus group K member 11 Pol protein (969 aa).

Residues 57-245 (LEKGHIEPSF…TPFHYLGMQI (189 aa)) form the Reverse transcriptase domain. The LPQG signature appears at 161–164 (LPQG). An RNase H type-1 domain is found at 460-590 (LENALTVFTD…ADLLVSSALI (131 aa)). 4 residues coordinate Mg(2+): aspartate 469, glutamate 497, aspartate 517, and aspartate 582. Residues 587-628 (SALIKAQELHALTHVNAAGLKNKFDVTWKQAKDIVQHCTQCQ) form an Integrase-type zinc finger. Zn(2+) is bound by residues histidine 596, histidine 600, cysteine 624, and cysteine 627. In terms of domain architecture, Integrase catalytic spans 642–803 (RGLCPNALWQ…TSAEQHLTGK (162 aa)). The integrase-type DNA-binding region spans 811–859 (KLIWWKDNKNKTWEIGKVITWGRGFACVSPGENQLPVWIPTRHLKFYNE).

The protein belongs to the beta type-B retroviral polymerase family. HERV class-II K(HML-2) pol subfamily.

The enzyme catalyses DNA(n) + a 2'-deoxyribonucleoside 5'-triphosphate = DNA(n+1) + diphosphate. The catalysed reaction is Endonucleolytic cleavage to 5'-phosphomonoester.. Early post-infection, the reverse transcriptase converts the viral RNA genome into double-stranded viral DNA. The RNase H domain of the reverse transcriptase performs two functions. It degrades the RNA template and specifically removes the RNA primer from the RNA/DNA hybrid. Following nuclear import, the integrase catalyzes the insertion of the linear, double-stranded viral DNA into the host cell chromosome. Endogenous Pol proteins may have kept, lost or modified their original function during evolution. This Homo sapiens (Human) protein is Endogenous retrovirus group K member 11 Pol protein (ERVK-11).